Consider the following 252-residue polypeptide: 5'-nucleotidase SurE (252 aa).

A divalent metal cation-binding residues include Asp-8, Asp-9, Ser-39, and Asn-91.

Belongs to the SurE nucleotidase family. A divalent metal cation serves as cofactor.

The protein resides in the cytoplasm. It carries out the reaction a ribonucleoside 5'-phosphate + H2O = a ribonucleoside + phosphate. Its function is as follows. Nucleotidase that shows phosphatase activity on nucleoside 5'-monophosphates. The sequence is that of 5'-nucleotidase SurE from Bordetella bronchiseptica (strain ATCC BAA-588 / NCTC 13252 / RB50) (Alcaligenes bronchisepticus).